We begin with the raw amino-acid sequence, 580 residues long: MSSSAECRPIGWGGWGPDPNTSPTRAAIKWFADPRSLHHQQCACGLWNARRAMQWVIPAPPRIWIDDQPRMVKLAYILGAVTVFLTSGNAADVSPTSSVAASTTPSAADSLSSLGLSLPAGNVLVGNNETFTASSPYYEPLIDEAWSGNCRLNASCIVTPKSAQEVSLVIQVLSILDTKFSIRSGGHSSSPGFSSIGSNGVLVALERLNTLSISADRKTLTVGPGNRWEAVYQYLEQYNLTVLGGREPVVGVGGFVLGGGLSLFYNTNGLAIDTVTRFQVVTPNGTIVNATPTEHADLYKGLKGGLNNFGIIVEYDLTTNTGIDVWFEVKNYTRAETPALLAAYATYLQNADVRSNVEIQANPAYTVVLYGYLDHVSAPSAFNAFSTVPSVSTVYPPTNASLNEVLLEIGTAGVTGSSWTYTVSFSFKVTNPDFLQESYKTYLEAAASLLPSGVLLEYVPQGIIPNLVTKGQAQNGGNLLGLEATPQVWGEIFAQFPATVSQSTVASAVNDLLAKITSSAESQGVHLPYIFANDAGPDQQVLRGYGEDNLKYIATVAERYDPKGVMQKLQNDAYFVSKEL.

The interval 1 to 21 is disordered; it reads MSSSAECRPIGWGGWGPDPNT. The region spanning 150-322 is the FAD-binding PCMH-type domain; the sequence is CRLNASCIVT…VEYDLTTNTG (173 aa). Pros-8alpha-FAD histidine is present on H187.

This sequence belongs to the oxygen-dependent FAD-linked oxidoreductase family.

The protein operates within secondary metabolite biosynthesis; terpenoid biosynthesis. Functionally, FAD-dependent monooxygenase; part of the gene cluster that mediates the biosynthesis of yanuthone D, a fungal isoprenoid epoxycyclohexenone that acts as an antibiotic against fungi and bacteria. The first step of the pathway is the synthesis of 6-methylsalicylic acid (6-MSA) by the polyketide synthase yanA. 6-MSA is then converted to m-cresol by the decarboxylase yanB. The cytochrome P450 monooxygenase yanC then catalyzes the oxidation of m-cresol to toluquinol. Epoxidation of toluquinol is then performed by the short chain dehydrogenase yanD, with the help of yanE, and a further prenylated by yanG leads to 7-deacetoxyyanuthone A. The next step is the hydroxylation of C-22 of 7-deacetoxyyanuthone A by the cytochrome P450 monooxygenase yanH to yield 22-deacetylyanuthone A. O-Mevalon transferase yanI then attaches mevalon to the hydroxyl group of 22-deacetylyanuthone A to produce yanuthone E. Finally, the FAD-dependent monooxygenase yanF oxidizes the hydroxyl group at C15 of yanuthone E to form yanuthone D. Furthermore, several branching points in the pathway lead to the production of yanuthones F and G from 7-deacetoxyyanuthone A; yanuthones H and I from 22-deacetylyanuthone A; and yanuthone J from yanuthone E. The chain is FAD-dependent monooxygenase yanF from Aspergillus niger (strain ATCC 1015 / CBS 113.46 / FGSC A1144 / LSHB Ac4 / NCTC 3858a / NRRL 328 / USDA 3528.7).